A 73-amino-acid chain; its full sequence is UPF0499 protein CHGG_06021 (73 aa).

A signal peptide spans 1–20 (MKSSIHVVLFFLLSLVASMA). Intrachain disulfides connect Cys41–Cys55, Cys48–Cys60, and Cys54–Cys69.

Belongs to the UPF0499 family.

It localises to the secreted. This is UPF0499 protein CHGG_06021 from Chaetomium globosum (strain ATCC 6205 / CBS 148.51 / DSM 1962 / NBRC 6347 / NRRL 1970) (Soil fungus).